The primary structure comprises 445 residues: NAD(P)H coenzyme A polysulfide/persulfide reductase (445 aa).

16–17 (AA) contributes to the FAD binding site. Arg-27 contributes to the CoA binding site. Residues 38–39 (EA) and 45–47 (HAP) contribute to the FAD site. Residues 44 to 48 (SHAPC), 65 to 66 (YY), and Arg-75 contribute to the CoA site. Residue Cys-48 is the Redox-active of the active site. Residues Val-85, Asp-283, and Ala-301 each contribute to the FAD site. Positions 305 and 361 each coordinate CoA. Position 425 (Tyr-425) interacts with FAD. CoA contacts are provided by Trp-433 and Arg-441.

It belongs to the class-III pyridine nucleotide-disulfide oxidoreductase family. Homodimer. Homotetramer. Requires FAD as cofactor.

The enzyme catalyses NADP(+) + 2 CoA = CoA-disulfide + NADPH + H(+). The catalysed reaction is NAD(+) + 2 CoA = CoA-disulfide + NADH + H(+). In terms of biological role, catalyzes the NAD(P)H-dependent reduction of polysulfide, CoA-polysulfides, and CoA persulfide, as well as the reduction of a range of other small persulfides, including TNB and glutathione persulfides. The likely in vivo substrates are di-, poly-, and persulfide derivatives of coenzyme A, although polysulfide itself is also efficiently reduced. Shows coenzyme A disulfide reductase (CoADR) activity with both NADH and NADPH, with a preference for NADPH. May also play a role in the reduction of elemental sulfur. This is NAD(P)H coenzyme A polysulfide/persulfide reductase from Pyrococcus horikoshii (strain ATCC 700860 / DSM 12428 / JCM 9974 / NBRC 100139 / OT-3).